Here is a 217-residue protein sequence, read N- to C-terminus: Ras-related protein Rab-19 (217 aa).

GTP-binding residues include Ser-26, Val-28, Gly-29, Lys-30, Thr-31, Cys-32, Tyr-42, Thr-43, Glu-44, Thr-45, and Thr-49. Thr-31 is a binding site for Mg(2+). The Switch 1 signature appears at Ser-39–Phe-54. Mg(2+)-binding residues include Thr-49 and Asp-72. Residues Ala-74–Ser-89 carry the Switch 2 motif. The GTP site is built by Gly-75, Asn-130, Lys-131, Asp-133, Ser-161, Ala-162, and Lys-163. 2 S-geranylgeranyl cysteine lipidation sites follow: Cys-215 and Cys-217. Cys-217 is modified (cysteine methyl ester).

It belongs to the small GTPase superfamily. Rab family. The cofactor is Mg(2+).

Its subcellular location is the cell membrane. The enzyme catalyses GTP + H2O = GDP + phosphate + H(+). Its activity is regulated as follows. Regulated by guanine nucleotide exchange factors (GEFs) which promote the exchange of bound GDP for free GTP. Regulated by GTPase activating proteins (GAPs) which increase the GTP hydrolysis activity. Inhibited by GDP dissociation inhibitors (GDIs). Its function is as follows. The small GTPases Rab are key regulators of intracellular membrane trafficking, from the formation of transport vesicles to their fusion with membranes. Rabs cycle between an inactive GDP-bound form and an active GTP-bound form that is able to recruit to membranes different set of downstream effectors directly responsible for vesicle formation, movement, tethering and fusion. The sequence is that of Ras-related protein Rab-19 from Homo sapiens (Human).